Reading from the N-terminus, the 369-residue chain is Flagellar P-ring protein (369 aa).

Positions 1–22 (MTKFKHLLALAALLLAAGAAQA) are cleaved as a signal peptide.

This sequence belongs to the FlgI family. As to quaternary structure, the basal body constitutes a major portion of the flagellar organelle and consists of four rings (L,P,S, and M) mounted on a central rod.

Its subcellular location is the periplasm. It localises to the bacterial flagellum basal body. Functionally, assembles around the rod to form the L-ring and probably protects the motor/basal body from shearing forces during rotation. The chain is Flagellar P-ring protein from Pseudomonas aeruginosa (strain LESB58).